We begin with the raw amino-acid sequence, 123 residues long: MATAAGATYFQRGSLFWFTVITLSFGYYTWVVFWPQSIPYQNLGPLGPFTQYLVDHHHTLLCNGYWLAWLIHVGESLYAIVLCKHKGITSGRAQLLWFLQTFFFGIASLTILIAYKRKRQKQT.

N-acetylalanine is present on A2. The next 3 helical transmembrane spans lie at 15 to 35 (LFWF…VFWP), 61 to 81 (LCNG…YAIV), and 95 to 115 (LLWF…LIAY).

Its subcellular location is the membrane. In Homo sapiens (Human), this protein is Transmembrane protein 254 (TMEM254).